Consider the following 283-residue polypeptide: Polyamine aminopropyltransferase (283 aa).

The region spanning 5–240 is the PABS domain; that stretch reads NTWFTEIHQD…GWWTATMACK (236 aa). An S-methyl-5'-thioadenosine-binding site is contributed by Q33. Positions 64 and 88 each coordinate spermidine. S-methyl-5'-thioadenosine contacts are provided by residues D108 and 139–140; that span reads DG. D158 serves as the catalytic Proton acceptor. Position 158–161 (158–161) interacts with spermidine; it reads DSTD. Residue P165 participates in S-methyl-5'-thioadenosine binding.

Belongs to the spermidine/spermine synthase family. Homodimer or homotetramer.

The protein resides in the cytoplasm. It carries out the reaction S-adenosyl 3-(methylsulfanyl)propylamine + putrescine = S-methyl-5'-thioadenosine + spermidine + H(+). The protein operates within amine and polyamine biosynthesis; spermidine biosynthesis; spermidine from putrescine: step 1/1. In terms of biological role, catalyzes the irreversible transfer of a propylamine group from the amino donor S-adenosylmethioninamine (decarboxy-AdoMet) to putrescine (1,4-diaminobutane) to yield spermidine. The sequence is that of Polyamine aminopropyltransferase from Thioalkalivibrio sulfidiphilus (strain HL-EbGR7).